A 328-amino-acid chain; its full sequence is Arabinose 5-phosphate isomerase KdsD (328 aa).

The 143-residue stretch at 42–184 (CEKMFWCKGK…AVALLKARGF (143 aa)) folds into the SIS domain. Substrate is bound by residues 75-76 (GT), histidine 82, histidine 88, 114-123 (ALIPVLKRLH), 148-150 (KVA), threonine 222, and aspartate 275. Histidine 82 is a binding site for Zn(2+). In terms of domain architecture, CBS 1 spans 210–268 (MHTGDEIPHVKKTASLRDALLEVTRKNLGMTVICDDNMMIEGIFTDGDLRRVFDMGVDV). In terms of domain architecture, CBS 2 spans 277-328 (MTPGGIRVRPGILAVEALNLMQSRHITSVMVADGDHLLGVLHMHDLLRAGVV).

Belongs to the SIS family. GutQ/KpsF subfamily. Homotetramer.

It catalyses the reaction D-arabinose 5-phosphate = D-ribulose 5-phosphate. The protein operates within carbohydrate biosynthesis; 3-deoxy-D-manno-octulosonate biosynthesis; 3-deoxy-D-manno-octulosonate from D-ribulose 5-phosphate: step 1/3. It participates in bacterial outer membrane biogenesis; lipopolysaccharide biosynthesis. Functionally, involved in the biosynthesis of 3-deoxy-D-manno-octulosonate (KDO), a unique 8-carbon sugar component of lipopolysaccharides (LPSs). Catalyzes the reversible aldol-ketol isomerization between D-ribulose 5-phosphate (Ru5P) and D-arabinose 5-phosphate (A5P). This is Arabinose 5-phosphate isomerase KdsD (kdsD) from Escherichia coli O6:H1 (strain CFT073 / ATCC 700928 / UPEC).